Consider the following 375-residue polypeptide: Putative type I specificity subunit S.MpnORF638P (375 aa).

The protein belongs to the type-I restriction system S methylase family. The methyltransferase is composed of M and S polypeptides.

In terms of biological role, the specificity (S) subunit of a type I methyltransferase (MTase); this subunit dictates DNA sequence specificity. The single R subunit has multiple frameshifts and is probably not expressed. This chain is Putative type I specificity subunit S.MpnORF638P, found in Mycoplasma pneumoniae (strain ATCC 29342 / M129 / Subtype 1) (Mycoplasmoides pneumoniae).